We begin with the raw amino-acid sequence, 90 residues long: MSIFRFFTRQQASAPQARERLQVLLAHERASYGGQSDLVAVLREEILAVIAKHIKVDREKVSVKMDRGDQVSTLEVDIELPLTAKKGRAA.

This sequence belongs to the MinE family.

Functionally, prevents the cell division inhibition by proteins MinC and MinD at internal division sites while permitting inhibition at polar sites. This ensures cell division at the proper site by restricting the formation of a division septum at the midpoint of the long axis of the cell. The chain is Cell division topological specificity factor from Brucella abortus (strain S19).